Consider the following 230-residue polypeptide: Potassium/proton antiporter CemA (230 aa).

The next 4 membrane-spanning stretches (helical) occupy residues 7 to 27 (LPSL…SSSF), 107 to 127 (ILHF…FFLG), 145 to 165 (LNDS…VGFH), and 181 to 201 (FGWA…PVIL).

This sequence belongs to the CemA family.

It is found in the plastid. It localises to the chloroplast inner membrane. It carries out the reaction K(+)(in) + H(+)(out) = K(+)(out) + H(+)(in). In terms of biological role, contributes to K(+)/H(+) antiport activity by supporting proton efflux to control proton extrusion and homeostasis in chloroplasts in a light-dependent manner to modulate photosynthesis. Prevents excessive induction of non-photochemical quenching (NPQ) under continuous-light conditions. Indirectly promotes efficient inorganic carbon uptake into chloroplasts. This is Potassium/proton antiporter CemA from Triticum aestivum (Wheat).